Reading from the N-terminus, the 244-residue chain is Proteasome subunit alpha 2 (244 aa).

This sequence belongs to the peptidase T1A family. In terms of assembly, the 20S proteasome core is composed of 14 alpha and 14 beta subunits that assemble into four stacked heptameric rings, resulting in a barrel-shaped structure. The two inner rings, each composed of seven catalytic beta subunits, are sandwiched by two outer rings, each composed of seven alpha subunits. The catalytic chamber with the active sites is on the inside of the barrel. Has a gated structure, the ends of the cylinder being occluded by the N-termini of the alpha-subunits. Is capped at one or both ends by the proteasome regulatory ATPase, PAN.

It localises to the cytoplasm. The formation of the proteasomal ATPase PAN-20S proteasome complex, via the docking of the C-termini of PAN into the intersubunit pockets in the alpha-rings, triggers opening of the gate for substrate entry. Interconversion between the open-gate and close-gate conformations leads to a dynamic regulation of the 20S proteasome proteolysis activity. In terms of biological role, component of the proteasome core, a large protease complex with broad specificity involved in protein degradation. The protein is Proteasome subunit alpha 2 of Haloarcula marismortui (strain ATCC 43049 / DSM 3752 / JCM 8966 / VKM B-1809) (Halobacterium marismortui).